The chain runs to 677 residues: Heat shock transcription factor (677 aa).

2 disordered regions span residues 1 to 56 (MGHN…DDSN) and 115 to 164 (STSS…SQQP). Composition is skewed to polar residues over residues 115 to 131 (STSS…TNAT) and 143 to 164 (QPSS…SQQP). A DNA-binding region spans residues 193–297 (ARPAFVNKLW…EYLLENIVRQ (105 aa)). An involved in trimerization region spans residues 320 to 373 (ELETVKYNQLAIAEDLKRITKDNEMLWKENMMARERHQSQQQVLEKLLRFLSSV). 2 stretches are compositionally biased toward low complexity: residues 400–416 (NHMS…INPN) and 457–501 (RSMS…QGQQ). Disordered stretches follow at residues 400 to 444 (NHMS…VPLQ), 457 to 541 (RSMS…NQYS), and 606 to 677 (KLNP…RRAA). The tract at residues 466 to 677 (NLNQRQSPQN…NNGQKRRRAA (212 aa)) is activatory. Polar residues-rich tracts occupy residues 502–541 (FSYP…NQYS) and 629–641 (FANT…SEQP). The segment covering 650 to 669 (EELRNSRLHEPDRSFEEKNN) has biased composition (basic and acidic residues).

This sequence belongs to the HSF family. In terms of assembly, homotrimer. Homotrimerization increases the affinity of HSF1 to DNA. Post-translationally, exhibits temperature-dependent phosphorylation.

Its subcellular location is the nucleus. Its function is as follows. DNA-binding transcription factor that specifically binds heat shock promoter elements (HSE) and activates transcription. The chain is Heat shock transcription factor from Kluyveromyces lactis (strain ATCC 8585 / CBS 2359 / DSM 70799 / NBRC 1267 / NRRL Y-1140 / WM37) (Yeast).